The primary structure comprises 470 residues: Putative gustatory receptor 28b (470 aa).

Residues 1 to 76 (MDIEMAKEPV…KTGKKAIKKT (76 aa)) are Cytoplasmic-facing. Residues 77–97 (IFGYINGIMHIAMFVFAYSLT) traverse the membrane as a helical segment. At 98–119 (IYNNCESVASYFFRSRITYFGD) the chain is on the extracellular side. The helical transmembrane segment at 120–140 (LMQIVSGFIGVTVIYLTAFVP) threads the bilayer. Residues 141-175 (NHRLERCLQKFHTMDVQLQTVGVKIMYSKVLRFSY) are Cytoplasmic-facing. A helical membrane pass occupies residues 176–196 (MVLISMFLVNVLFTGGTFSVL). The Extracellular segment spans residues 197–204 (YSSEVAPT). Residues 205–225 (MALHFTFLIQHTVIAIAIALF) traverse the membrane as a helical segment. The Cytoplasmic portion of the chain corresponds to 226–309 (SCFTYLVEMR…ATANKYFTYQ (84 aa)). The chain crosses the membrane as a helical span at residues 310–330 (LLTIISIAFLIIVFDAYYVLE). Residues 331 to 346 (TLLGKSKRESKFKTVE) lie on the Extracellular side of the membrane. A helical transmembrane segment spans residues 347–367 (FVTFFSCQMILYLIAIISIVE). Residues 368 to 423 (GSNRAIKKSEKTGGIVHSLLNKTKSAEVKEKLQQFSMQLMHLKINFTAAGLFNIDR) lie on the Cytoplasmic side of the membrane. A helical membrane pass occupies residues 424–444 (TLYFTISGALTTYLIILLQFT). At 445-470 (SNSPNNGYGNGSSCCETFNNMTNHTL) the chain is on the extracellular side. N-linked (GlcNAc...) asparagine glycosylation is found at Asn454, Asn464, and Asn467.

It belongs to the insect chemoreceptor superfamily. Gustatory receptor (GR) family. Gr66a subfamily. As to expression, isoforms A and E have taste neuron-specific expression restricted to the labial palps, the internal taste organs in the pharynx, and the legs. In addition to expression in a large number of taste neurons, isoform A is also expressed in a few nonchemosensory neurons, including the campaniform sensilla of the wing, leg stretch receptors, and multiple dendritic neurons in the abdomen. Isoform B is the only receptor not expressed in gustatory receptor neurons in the labellum. We observe expression of this receptor in a single large cell at the base of each maxillary palp, in campaniform sensilla of the wing, and multiple dendritic neurons in the abdomen. Isoform C is expressed by many gustatory receptor neurons in the labial palps, the pharyngeal taste clusters, and taste neurons in the legs. In addition, isoform C expressed in a single cell at the base of the maxillary palps, neurons in the Johnston's organ (JO), campaniform sensilla of the wing, stretch receptors and the femoral chordotonal organ of the legs, and multiple dendritic neurons in the abdomen. Isoform D is expressed in a small number of gustatory receptor neurons in the labial palps, the ventral cibarial sense organ (VCSO), and legs. Atypical expression is observed in three neurons in the arista, campaniform sensilla of the wing, stretch and femoral chordotonal organ receptors in the legs, and multiple dendritic neurons in the abdomen. In larvae, Isoform A is expressed in neurons of the terminal external chemosensory organ and the dorsal external chemosensory organ; and isoform E is expressed in neurons of the terminal external chemosensory organ.

It is found in the cell membrane. Its function is as follows. Probable gustatory receptor which mediates acceptance or avoidance behavior, depending on its substrates. Atypical expression also suggests nongustatory roles in the nervous system and tissues involved in proprioception, hygroreception, and other sensory modalities. It is also possible that it has chemosensory roles in the detection of internal ligands. This chain is Putative gustatory receptor 28b (Gr28b), found in Drosophila melanogaster (Fruit fly).